We begin with the raw amino-acid sequence, 230 residues long: MKEERPIIALDFSSFEETKAFLDLFPAEEKLYVKIGMELYYAQGPDIVRYIKSLGHNVFLDLKLHDIPNTVRAAMAVLKELDIDMATVHAAGGVEMLKAAREGLGQGPTLIAVTQLTSTSEDQMRGDQNIQTSLLESVLHYSKGAAKAQLDGVVCSAQEVEAIKAVTPTGFTCLTPGIRPKGSNIGDQKRVMTPNQARRIGSDYIVVGRPITQAKDPVAAYQAIKAEWAG.

Substrate contacts are provided by residues aspartate 11, lysine 34, 61–70 (DLKLHDIPNT), threonine 117, arginine 179, glutamine 188, glycine 208, and arginine 209. Catalysis depends on lysine 63, which acts as the Proton donor.

This sequence belongs to the OMP decarboxylase family. Type 1 subfamily. Homodimer.

It carries out the reaction orotidine 5'-phosphate + H(+) = UMP + CO2. Its pathway is pyrimidine metabolism; UMP biosynthesis via de novo pathway; UMP from orotate: step 2/2. Its function is as follows. Catalyzes the decarboxylation of orotidine 5'-monophosphate (OMP) to uridine 5'-monophosphate (UMP). The polypeptide is Orotidine 5'-phosphate decarboxylase (Streptococcus pyogenes serotype M6 (strain ATCC BAA-946 / MGAS10394)).